Consider the following 616-residue polypeptide: Probable methyltransferase PMT2 (616 aa).

Topologically, residues 1–13 (MALKSSSADGKTR) are cytoplasmic. Residues 14–34 (SSVQIFIVFSLCCFFYILGAW) traverse the membrane as a helical; Signal-anchor for type II membrane protein segment. Residues 35–616 (QRSGFGKGDS…YWVTNSTSTH (582 aa)) are Lumenal-facing. Residues N205 and N611 are each glycosylated (N-linked (GlcNAc...) asparagine).

Belongs to the methyltransferase superfamily.

It localises to the golgi apparatus membrane. The polypeptide is Probable methyltransferase PMT2 (Arabidopsis thaliana (Mouse-ear cress)).